Here is a 372-residue protein sequence, read N- to C-terminus: ATP-sensitive inward rectifier potassium channel 1 (372 aa).

Residues 1-58 (MFKHLRRWFVTHIFGRSRQRARLVSKDGRCNIEFGNVDAQSRFIFFVDIWTTVLDLKW) lie on the Cytoplasmic side of the membrane. At Ser25 the chain carries Phosphoserine; by SGK1. A helical membrane pass occupies residues 59 to 83 (RYKMTVFITAFLGSWFLFGLLWYVV). At 84 to 108 (AYVHKDLPEFYPPDNRTPCVENING) the chain is on the extracellular side. N-linked (GlcNAc...) asparagine glycosylation is present at Asn98. The segment at residues 109–120 (MTSAFLFSLETQ) is an intramembrane region (helical; Pore-forming). An intramembrane region (pore-forming) is located at residues 121 to 127 (VTIGYGF). A Selectivity filter motif is present at residues 122 to 127 (TIGYGF). Over 128-136 (RFVTEQCAT) the chain is Extracellular. A helical membrane pass occupies residues 137-158 (AIFLLIFQSILGVIINSFMCGA). Residues 159–372 (ILAKISRPKK…EVDETDDTQM (214 aa)) are Cytoplasmic-facing. A polyphosphoinositide (PIP2)-binding region spans residues 161–188 (AKISRPKKRAKTITFSKNAVISKRGGKL). ATP is bound at residue 204–211 (GSHIYGKL).

It belongs to the inward rectifier-type potassium channel (TC 1.A.2.1) family. KCNJ1 subfamily. As to quaternary structure, interacts with SGK1 and SLC9A3R2/NHERF2. In terms of processing, phosphorylation at Ser-25 by SGK1 is necessary for its expression at the cell membrane.

It localises to the cell membrane. It catalyses the reaction K(+)(in) = K(+)(out). Inhibited by WNK3. Activated by phosphatidylinositol 4,5 biphosphate (PtdIns(4,5)P2). Inward rectifier potassium channels are characterized by a greater tendency to allow potassium to flow into the cell rather than out of it. Their voltage dependence is regulated by the concentration of extracellular potassium; as external potassium is raised, the voltage range of the channel opening shifts to more positive voltages. The inward rectification is mainly due to the blockage of outward current by internal magnesium. This channel is activated by internal ATP and can be blocked by external barium. In the kidney, probably plays a major role in potassium homeostasis. The protein is ATP-sensitive inward rectifier potassium channel 1 (Kcnj1) of Mus musculus (Mouse).